The sequence spans 358 residues: tRNA N6-adenosine threonylcarbamoyltransferase (358 aa).

2 residues coordinate Fe cation: His118 and His122. Residues 143-147 (IVSGG), Asp176, Gly189, and Asn298 each bind substrate. Residue Asp326 participates in Fe cation binding.

Belongs to the KAE1 / TsaD family. Fe(2+) is required as a cofactor.

The protein resides in the cytoplasm. It carries out the reaction L-threonylcarbamoyladenylate + adenosine(37) in tRNA = N(6)-L-threonylcarbamoyladenosine(37) in tRNA + AMP + H(+). In terms of biological role, required for the formation of a threonylcarbamoyl group on adenosine at position 37 (t(6)A37) in tRNAs that read codons beginning with adenine. Is involved in the transfer of the threonylcarbamoyl moiety of threonylcarbamoyl-AMP (TC-AMP) to the N6 group of A37, together with TsaE and TsaB. TsaD likely plays a direct catalytic role in this reaction. In Rhodopirellula baltica (strain DSM 10527 / NCIMB 13988 / SH1), this protein is tRNA N6-adenosine threonylcarbamoyltransferase.